The sequence spans 258 residues: Spectinomycin 9-adenylyltransferase (258 aa).

It carries out the reaction spectinomycin + ATP = 9-O-adenylylspectinomycin + diphosphate. Its function is as follows. Mediates bacterial resistance to spectinomycin, is probably a spectinomycin 9-adenylyltransferase. This Campylobacter jejuni protein is Spectinomycin 9-adenylyltransferase.